A 114-amino-acid chain; its full sequence is Large ribosomal subunit protein bL20 (114 aa).

Belongs to the bacterial ribosomal protein bL20 family.

In terms of biological role, binds directly to 23S ribosomal RNA and is necessary for the in vitro assembly process of the 50S ribosomal subunit. It is not involved in the protein synthesizing functions of that subunit. The sequence is that of Large ribosomal subunit protein bL20 from Anaeromyxobacter dehalogenans (strain 2CP-C).